The following is an 85-amino-acid chain: Small ribosomal subunit protein bS16 (85 aa).

The protein belongs to the bacterial ribosomal protein bS16 family.

In Nitrosomonas eutropha (strain DSM 101675 / C91 / Nm57), this protein is Small ribosomal subunit protein bS16.